The chain runs to 95 residues: Homeotic protein bicoid (95 aa).

Disordered stretches follow at residues 1–29 (NLEP…STGM) and 42–63 (GKPS…MMHD).

Belongs to the paired homeobox family. Bicoid subfamily.

It is found in the nucleus. Its function is as follows. Bicoid is polarity protein that provides positional cues for the development of head and thoracic segments. BCD regulates the expression of zygotic genes, possibly through its homeodomain, and inhibits the activity of other maternal gene products. The sequence is that of Homeotic protein bicoid (bcd) from Drosophila subobscura (Fruit fly).